A 170-amino-acid polypeptide reads, in one-letter code: MKLHDLRPAEGAHRKRKRIGRGHGSGKGKTGGKGMMGQKARSGPGPYRTFEGGQNRLVKRMPFKRGFVNKFRVEYEVVNVGSLVDWPVDLEVTPETLLARRLVRRKRMPVKILGDGELTQPLVIKAHKFSASARQKIEAAGGKAIDLTWVVERHSRSRGPNPSMRNARQS.

Residues 1–12 (MKLHDLRPAEGA) are compositionally biased toward basic and acidic residues. Residues 1–52 (MKLHDLRPAEGAHRKRKRIGRGHGSGKGKTGGKGMMGQKARSGPGPYRTFEG) form a disordered region. Basic residues predominate over residues 13–26 (HRKRKRIGRGHGSG).

The protein belongs to the universal ribosomal protein uL15 family. In terms of assembly, part of the 50S ribosomal subunit.

Functionally, binds to the 23S rRNA. The chain is Large ribosomal subunit protein uL15 from Chloroflexus aurantiacus (strain ATCC 29366 / DSM 635 / J-10-fl).